The primary structure comprises 318 residues: Thioredoxin reductase (318 aa).

36–43 (TGLQQGGQ) is an FAD binding site. A disulfide bond links Cys136 and Cys139. 286 to 295 (DVMDHNYRQA) lines the FAD pocket.

This sequence belongs to the class-II pyridine nucleotide-disulfide oxidoreductase family. In terms of assembly, homodimer. FAD serves as cofactor.

Its subcellular location is the cytoplasm. It carries out the reaction [thioredoxin]-dithiol + NADP(+) = [thioredoxin]-disulfide + NADPH + H(+). The protein is Thioredoxin reductase (trxB) of Haemophilus influenzae (strain ATCC 51907 / DSM 11121 / KW20 / Rd).